The primary structure comprises 436 residues: uncharacterized protein (436 aa).

Transmembrane regions (helical) follow at residues 38–58, 70–90, 102–122, 125–145, 160–180, 197–217, 254–274, 291–311, 319–339, 342–362, 383–403, and 409–429; these read ILIF…TVGA, VAGI…LLIG, LAGG…AALI, VALL…NLQV, TAAS…PNLV, GPFI…LIFL, IMVG…IMTM, LVIG…GLLV, MAIA…IAPA, LSLL…GLLT, FDVL…MVVA, and ILSI…IWYF.

It belongs to the major facilitator superfamily.

It is found in the cell membrane. This is an uncharacterized protein from Bacillus subtilis (strain 168).